The primary structure comprises 342 residues: Phosphate acyltransferase (342 aa).

It belongs to the PlsX family. Homodimer. Probably interacts with PlsY.

The protein localises to the cytoplasm. The catalysed reaction is a fatty acyl-[ACP] + phosphate = an acyl phosphate + holo-[ACP]. The protein operates within lipid metabolism; phospholipid metabolism. Its function is as follows. Catalyzes the reversible formation of acyl-phosphate (acyl-PO(4)) from acyl-[acyl-carrier-protein] (acyl-ACP). This enzyme utilizes acyl-ACP as fatty acyl donor, but not acyl-CoA. In Shewanella halifaxensis (strain HAW-EB4), this protein is Phosphate acyltransferase.